The following is a 1173-amino-acid chain: Rac guanine nucleotide exchange factor JJ (1173 aa).

Disordered regions lie at residues 1–380, 458–479, and 712–765; these read MSYE…NQTQ, KDQLVQQQNASKKKGEEDLKQM, and DDQN…QQQQ. 2 stretches are compositionally biased toward low complexity: residues 8 to 23 and 35 to 45; these read QQQQQQQQQQQQQQQQ and QQQQHPQPQYP. Positions 50–62 are enriched in polar residues; sequence TAQSNDSQQQHYG. Composition is skewed to low complexity over residues 72 to 82 and 98 to 118; these read TTSTTQQQQQQ and QYDQYNTTNTTTPNTTQNYDY. Over residues 119–133 the composition is skewed to polar residues; sequence SNTSGNRNSGQYDQY. 3 stretches are compositionally biased toward low complexity: residues 134 to 143, 153 to 191, and 208 to 219; these read TTTNTTSANT, SPTPSSYDYSTNSYYSQQQQQQPTPTVAATNNTTNTSTN, and SQTQQQHSPTSS. The segment covering 220–239 has biased composition (polar residues); the sequence is YDYSQVTNNTATNYDSYYQQ. A compositionally biased stretch (low complexity) spans 240 to 258; it reads PTTPTSTSSSSSTTTTTTT. The segment covering 262 to 277 has biased composition (basic and acidic residues); it reads SKFEKSQSLKNMDHFI. Positions 280-295 are enriched in polar residues; sequence TPSNTPSATINSWDYN. Low complexity predominate over residues 296–380; that stretch reads QQQPQPQQPQ…NTDTYSNQTQ (85 aa). The span at 470 to 479 shows a compositional bias: basic and acidic residues; the sequence is KKGEEDLKQM. Residues 743–765 show a composition bias toward low complexity; sequence QQPQPQQEQPPQQQQQQQQQQQQ. The IQ domain occupies 793–822; the sequence is RFGDIIRVQRVSRKWLARKKFKDLVKMKLL. Residues 833-1016 enclose the DH domain; that stretch reads NRFKSVNELY…KDINKYINDR (184 aa). The region spanning 1044–1146 is the PH domain; the sequence is RYFVRESQCN…WLQDLSVELK (103 aa).

In terms of biological role, GTPase-activating protein. In Dictyostelium discoideum (Social amoeba), this protein is Rac guanine nucleotide exchange factor JJ (gxcJJ).